The primary structure comprises 183 residues: UPF0397 protein VSAL_I1988 (183 aa).

The next 5 membrane-spanning stretches (helical) occupy residues 8-28, 41-61, 74-94, 110-130, and 147-167; these read VVVI…MFGI, AVLA…VGFI, VWLT…LFPI, FFIF…TSAF, and LCII…FILT.

Belongs to the UPF0397 family.

The protein localises to the cell membrane. This Aliivibrio salmonicida (strain LFI1238) (Vibrio salmonicida (strain LFI1238)) protein is UPF0397 protein VSAL_I1988.